The chain runs to 2473 residues: Neurogenic locus notch homolog protein 2 (2473 aa).

An N-terminal signal peptide occupies residues 1–25 (MPALRPAALRALLWLWLCGAGPAHA). 4 EGF-like domains span residues 26-63 (LQCR…EYCQ), 64-102 (HRDP…EDCQ), 105-143 (TSHP…KQCQ), and 144-180 (WTDA…QKCE). Topologically, residues 26–1679 (LQCRGGQEPC…SELESPRNAQ (1654 aa)) are extracellular. 83 disulfide bridges follow: Cys28/Cys41, Cys35/Cys51, Cys53/Cys62, Cys68/Cys79, Cys73/Cys90, Cys92/Cys101, Cys109/Cys121, Cys115/Cys131, Cys133/Cys142, Cys148/Cys159, Cys153/Cys168, Cys170/Cys179, Cys186/Cys198, Cys192/Cys207, Cys209/Cys218, Cys230/Cys246, Cys248/Cys257, Cys264/Cys275, Cys269/Cys284, Cys286/Cys295, Cys302/Cys315, Cys309/Cys324, Cys326/Cys335, Cys342/Cys353, Cys347/Cys362, Cys364/Cys373, Cys379/Cys390, Cys384/Cys401, Cys403/Cys412, Cys419/Cys433, Cys427/Cys442, Cys444/Cys453, Cys460/Cys471, Cys465/Cys480, Cys482/Cys491, Cys498/Cys509, Cys503/Cys518, Cys520/Cys529, Cys536/Cys547, Cys541/Cys556, Cys558/Cys567, Cys574/Cys584, Cys579/Cys593, Cys595/Cys604, Cys611/Cys622, Cys616/Cys631, Cys633/Cys642, Cys649/Cys659, Cys654/Cys668, Cys670/Cys679, Cys686/Cys697, Cys691/Cys706, Cys708/Cys717, Cys724/Cys734, Cys729/Cys743, Cys745/Cys754, Cys761/Cys772, Cys766/Cys781, Cys783/Cys792, Cys799/Cys810, Cys804/Cys819, Cys821/Cys830, Cys837/Cys848, Cys842/Cys859, Cys861/Cys870, Cys877/Cys888, Cys882/Cys897, Cys899/Cys908, Cys915/Cys926, Cys920/Cys935, Cys937/Cys946, Cys953/Cys964, Cys958/Cys973, Cys975/Cys984, Cys991/Cys1002, Cys996/Cys1011, Cys1013/Cys1022, Cys1029/Cys1040, Cys1034/Cys1049, Cys1051/Cys1060, Cys1067/Cys1078, Cys1072/Cys1087, and Cys1089/Cys1098. An N-linked (GlcNAc...) asparagine glycan is attached at Asn46. An N-linked (GlcNAc...) asparagine glycan is attached at Asn155. The EGF-like 5; calcium-binding domain maps to 182–219 (DINECDIPGRCQHGGTCLNLPGSYRCQCPQGFTGQHCD). Residues 221–258 (PYVPCAPSPCVNGGTCRQTGDFTFECNCLPGFEGSTCE) form the EGF-like 6; incomplete domain. One can recognise an EGF-like 7; calcium-binding domain in the interval 260–296 (NIDDCPNHKCQNGGVCVDGVNTYNCRCPPQWTGQFCT). One can recognise an EGF-like 8; calcium-binding domain in the interval 298-336 (DVDECLLQPNACQNGGTCTNRNGGYGCVCVNGWSGDDCS). Residues 338-374 (NIDDCAYASCTPGSTCIDRVASFSCLCPEGKAGLLCH) enclose the EGF-like 9; calcium-binding domain. In terms of domain architecture, EGF-like 10 spans 375 to 413 (LDDACISNPCHKGALCDTNPLNGQYICTCPQGYKGADCT). In terms of domain architecture, EGF-like 11; calcium-binding spans 415 to 454 (DVDECAMANSNPCEHAGKCVNTDGAFHCECLKGYAGPRCE). The EGF-like 12; calcium-binding domain occupies 456 to 492 (DINECHSDPCQNDATCLDKIGGFTCLCMPGFKGVHCE). Residues 494–530 (EVNECQSNPCVNNGQCVDKVNRFQCLCPPGFTGPVCQ) form the EGF-like 13; calcium-binding domain. Positions 532–568 (DIDDCSSTPCLNGAKCIDHPNGYECQCATGFTGILCD) constitute an EGF-like 14; calcium-binding domain. The 36-residue stretch at 570 to 605 (NIDNCDPDPCHHGQCQDGIDSYTCICNPGYMGAICS) folds into the EGF-like 15; calcium-binding domain. The region spanning 607-643 (QIDECYSSPCLNDGRCIDLVNGYQCNCQPGTSGLNCE) is the EGF-like 16; calcium-binding domain. A glycan (O-linked (Glc...) serine; alternate) is linked at Ser613. The O-linked (Xyl...) serine; alternate glycan is linked to Ser613. An EGF-like 17; calcium-binding domain is found at 645–680 (NFDDCASNPCMHGVCVDGINRYSCVCSPGFTGQRCN). The EGF-like 18; calcium-binding domain occupies 682 to 718 (DIDECASNPCRKGATCINDVNGFRCICPEGPHHPSCY). One can recognise an EGF-like 19 domain in the interval 720 to 755 (QVNECLSNPCIHGNCTGGLSGYKCLCDAGWVGVNCE). Residue Asn733 is glycosylated (N-linked (GlcNAc...) asparagine). Residues 757-793 (DKNECLSNPCQNGGTCNNLVNGYRCTCKKGFKGYNCQ) form the EGF-like 20; calcium-binding domain. An EGF-like 21; calcium-binding domain is found at 795-831 (NIDECASNPCLNQGTCFDDVSGYTCHCMLPYTGKNCQ). The 39-residue stretch at 833–871 (VLAPCSPNPCENAAVCKEAPNFESFSCLCAPGWQGKRCT) folds into the EGF-like 22 domain. The region spanning 873-909 (DVDECISKPCMNNGVCHNTQGSYVCECPPGFSGMDCE) is the EGF-like 23; calcium-binding domain. Residues 911-947 (DINDCLANPCQNGGSCVDHVNTFSCQCHPGFIGDKCQ) form the EGF-like 24; calcium-binding domain. The EGF-like 25; calcium-binding domain occupies 949-985 (DMNECLSEPCKNGGTCSDYVNSYTCTCPAGFHGVHCE). Residues 987–1023 (NIDECTESSCFNGGTCVDGINSFSCLCPVGFTGPFCL) enclose the EGF-like 26; calcium-binding domain. Positions 1025 to 1061 (DINECSSNPCLNAGTCVDGLGTYRCICPLGYTGKNCQ) constitute an EGF-like 27; calcium-binding domain. EGF-like domains are found at residues 1063 to 1099 (LVNL…AYCD) and 1101 to 1147 (LNVS…SYCE). Residue Asn1102 is glycosylated (N-linked (GlcNAc...) asparagine). 24 disulfide bridges follow: Cys1105–Cys1126, Cys1120–Cys1135, Cys1137–Cys1146, Cys1153–Cys1164, Cys1158–Cys1173, Cys1175–Cys1184, Cys1191–Cys1202, Cys1196–Cys1211, Cys1213–Cys1222, Cys1229–Cys1241, Cys1235–Cys1250, Cys1252–Cys1261, Cys1268–Cys1281, Cys1273–Cys1290, Cys1292–Cys1301, Cys1308–Cys1319, Cys1313–Cys1331, Cys1333–Cys1346, Cys1378–Cys1389, Cys1383–Cys1400, Cys1402–Cys1411, Cys1425–Cys1448, Cys1430–Cys1443, and Cys1439–Cys1455. The EGF-like 30; calcium-binding domain maps to 1149–1185 (QLDECASNPCQHGATCNDFIGGYRCECVPGYQGVNCE). The EGF-like 31; calcium-binding domain occupies 1187 to 1223 (EVDECQNQPCQNGGTCIDLVNHFKCSCPPGTRGLLCE). In terms of domain architecture, EGF-like 32; calcium-binding spans 1225–1262 (NIDECAGGPHCLNGGQCVDRIGGYTCRCLPGFAGERCE). 3 EGF-like domains span residues 1264-1302 (DINE…RHCE), 1304-1343 (FLDV…ARCQ), and 1375-1412 (ESGC…SHCE). LNR repeat units lie at residues 1425–1465 (CQSQ…PWAN), 1466–1502 (CTST…NSKT), and 1503–1544 (CKYD…NLAE). The negative regulatory region (NRR) stretch occupies residues 1425-1679 (CQSQYCADKA…SELESPRNAQ (255 aa)). N-linked (GlcNAc...) asparagine glycosylation is present at Asn1465. Cystine bridges form between Cys1466–Cys1489, Cys1472–Cys1484, Cys1480–Cys1496, Cys1503–Cys1527, Cys1509–Cys1522, Cys1518–Cys1534, and Cys1634–Cys1641. Residues 1680 to 1700 (LLYLLAVAVVIILFFILLGVI) traverse the membrane as a helical segment. Topologically, residues 1701 to 2473 (MAKRKRKHGF…PPHSNMQVYA (773 aa)) are cytoplasmic. The residue at position 1718 (Thr1718) is a Phosphothreonine. Positions 1755–1778 (GTSEHWVDDEGPQPKKAKAEDEAL) are disordered. Ser1780 is subject to Phosphoserine. Thr1803 carries the phosphothreonine modification. Ser1805 is subject to Phosphoserine. The residue at position 1809 (Thr1809) is a Phosphothreonine. ANK repeat units follow at residues 1828-1872 (DGCT…SLQA), 1877-1906 (TGEM…DANA), 1910-1940 (MGRC…DLDA), 1944-1973 (DGTT…DVNA), 1977-2006 (HGKS…NRDM), and 2010-2039 (KEET…NRDI). Ser1843 and Ser1846 each carry phosphoserine. A phosphoserine mark is found at Ser2071, Ser2079, and Ser2082. Thr2098 carries the phosphothreonine modification. Disordered regions lie at residues 2098–2117 (TPMG…PTSL), 2122–2169 (KEAK…TSSP), and 2382–2473 (VGKY…QVYA). The segment covering 2099–2108 (PMGKKARRPN) has biased composition (basic residues). Composition is skewed to polar residues over residues 2140–2151 (VQLSESSVTLSP) and 2390–2400 (SQHSYASSNAA). Over residues 2419-2446 (PSPESPDQWSSSSPHSASDWSDVTTSPT) the composition is skewed to low complexity. The span at 2447–2456 (PGGGGGGQRG) shows a compositional bias: gly residues.

It belongs to the NOTCH family. In terms of assembly, heterodimer of a C-terminal fragment N(TM) and an N-terminal fragment N(EC) which are probably linked by disulfide bonds. Interacts with MAML1, MAML2 and MAML3 which act as transcriptional coactivators for NOTCH2. Interacts with RELA/p65. Interacts with HIF1AN. Interacts (via ANK repeats) with TCIM, the interaction inhibits the nuclear translocation of NOTCH2 N2ICD. Interacts with CUL1, RBX1, SKP1 and FBXW7 that are SCF(FBXW7) E3 ubiquitin-protein ligase complex components. Interacts with MINAR1; this interaction increases MINAR1 stability and function. Interacts with MDK; this interaction mediates a nuclear accumulation of NOTCH2 and therefore activation of NOTCH2 signaling leading to interaction between HES1 and STAT3. Interacts with MINAR2. Synthesized in the endoplasmic reticulum as an inactive form which is proteolytically cleaved by a furin-like convertase in the trans-Golgi network before it reaches the plasma membrane to yield an active, ligand-accessible form. Cleavage results in a C-terminal fragment N(TM) and a N-terminal fragment N(EC). Following ligand binding, it is cleaved by TNF-alpha converting enzyme (TACE) to yield a membrane-associated intermediate fragment called notch extracellular truncation (NEXT). This fragment is then cleaved by presenilin dependent gamma-secretase to release a notch-derived peptide containing the intracellular domain (NICD) from the membrane. In terms of processing, hydroxylated by HIF1AN. Post-translationally, can be either O-glucosylated or O-xylosylated at Ser-613 by POGLUT1. Phosphorylated by GSK3. GSK3-mediated phosphorylation is necessary for NOTCH2 recognition by FBXW7, ubiquitination and degradation via the ubiquitin proteasome pathway. Expressed in the brain, liver, kidney, neuroepithelia, somites, optic vesicles and branchial arches, but not heart.

Its subcellular location is the cell membrane. The protein resides in the nucleus. It is found in the cytoplasm. Its function is as follows. Functions as a receptor for membrane-bound ligands Jagged-1 (JAG1), Jagged-2 (JAG2) and Delta-1 (DLL1) to regulate cell-fate determination. Upon ligand activation through the released notch intracellular domain (NICD) it forms a transcriptional activator complex with RBPJ/RBPSUH and activates genes of the enhancer of split locus. Affects the implementation of differentiation, proliferation and apoptotic programs. May play an essential role in postimplantation development, probably in some aspect of cell specification and/or differentiation. In collaboration with RELA/p65 enhances NFATc1 promoter activity and positively regulates RANKL-induced osteoclast differentiation. Positively regulates self-renewal of liver cancer cells. The chain is Neurogenic locus notch homolog protein 2 from Mus musculus (Mouse).